Reading from the N-terminus, the 262-residue chain is NAD-dependent protein deacylase (262 aa).

In terms of domain architecture, Deacetylase sirtuin-type spans 1-262 (MSNLRRAAEA…AALSPPGVPT (262 aa)). Residue 22–42 (GAGISADSGIPTFRDKLTGLW) participates in NAD(+) binding. Tyr-67 and Arg-70 together coordinate substrate. Residue 101 to 104 (QNID) participates in NAD(+) binding. The active-site Proton acceptor is the His-119. Residues Cys-127, Cys-130, Cys-155, and Cys-158 each contribute to the Zn(2+) site. NAD(+) contacts are provided by residues 195-197 (GTS), 221-223 (NLE), and Ala-239.

It belongs to the sirtuin family. Class III subfamily. It depends on Zn(2+) as a cofactor.

Its subcellular location is the cytoplasm. It carries out the reaction N(6)-acetyl-L-lysyl-[protein] + NAD(+) + H2O = 2''-O-acetyl-ADP-D-ribose + nicotinamide + L-lysyl-[protein]. The enzyme catalyses N(6)-succinyl-L-lysyl-[protein] + NAD(+) + H2O = 2''-O-succinyl-ADP-D-ribose + nicotinamide + L-lysyl-[protein]. Its function is as follows. NAD-dependent lysine deacetylase and desuccinylase that specifically removes acetyl and succinyl groups on target proteins. Modulates the activities of several proteins which are inactive in their acylated form. The polypeptide is NAD-dependent protein deacylase (Pseudomonas putida (strain ATCC 47054 / DSM 6125 / CFBP 8728 / NCIMB 11950 / KT2440)).